Consider the following 1876-residue polypeptide: Phenolphthiocerol/phthiocerol polyketide synthase subunit A (1876 aa).

One can recognise a Carrier 1 domain in the interval 9–83; that stretch reads ADLRHWLIDY…ALAAYLAAPE (75 aa). Ser-43 is subject to O-(pantetheine 4'-phosphoryl)serine. One can recognise a Ketosynthase family 3 (KS3) domain in the interval 101 to 526; sequence DEPIAVVGMG…GTNAHVVIEQ (426 aa). Catalysis depends on for beta-ketoacyl synthase activity residues Cys-273, His-408, and His-448. Residues 624-950 form an acyltransferase region; sequence EGSPGPGTVF…NLNKAHTIHP (327 aa). Catalysis depends on Ser-720, which acts as the For malonyltransferase activity. An N-terminal hotdog fold region spans residues 997 to 1112; that stretch reads HTTVATVSAS…AQLSSSPSDS (116 aa). The region spanning 997–1267 is the PKS/mFAS DH domain; it reads HTTVATVSAS…YRALDFGLDV (271 aa). The active-site Proton acceptor; for dehydratase activity is the His-1027. The segment at 1104–1130 is disordered; that stretch reads QLSSSPSDSASSLNEHHRANGQPPERA. Low complexity predominate over residues 1106-1115; the sequence is SSSPSDSASS. The segment at 1130-1267 is C-terminal hotdog fold; the sequence is AHRDLIPDLA…YRALDFGLDV (138 aa). Asp-1186 acts as the Proton donor; for dehydratase activity in catalysis. Residues 1491–1728 are beta-ketoacyl reductase; sequence AAYLITGGLG…DGYDVAQAVV (238 aa). 1492–1551 is a binding site for NADP(+); it reads AYLITGGLGALGLLMADWLADRGAHRLVLTGRTPLPPRRDWQLDTLDTELRRRIDAIRAL. Residues 1759–1836 enclose the Carrier 2 domain; it reads EVRSELEQGL…SLASYLAKRV (78 aa). Ser-1796 is subject to O-(pantetheine 4'-phosphoryl)serine.

NADP(+) serves as cofactor. Pantetheine 4'-phosphate is required as a cofactor.

The enzyme catalyses icosanoyl-[(phenol)carboxyphthiodiolenone synthase] + 2 (S)-methylmalonyl-CoA + 3 malonyl-CoA + 5 NADPH + 10 H(+) = C32-carboxyphthiodiolenone-[(phenol)carboxyphthiodiolenone synthase] + 5 CO2 + 5 NADP(+) + 5 CoA + 2 H2O. It carries out the reaction docosanoyl-[(phenol)carboxyphthiodiolenone synthase] + 2 (S)-methylmalonyl-CoA + 3 malonyl-CoA + 5 NADPH + 10 H(+) = C34-carboxyphthiodiolenone-[(phenol)carboxyphthiodiolenone synthase] + 5 CO2 + 5 NADP(+) + 5 CoA + 2 H2O. It catalyses the reaction 17-(4-hydroxyphenyl)heptadecanoyl-[(phenol)carboxyphthiodiolenone synthase] + 2 (S)-methylmalonyl-CoA + 3 malonyl-CoA + 5 NADPH + 10 H(+) = C35-(phenol)carboxyphthiodiolenone-[(phenol)carboxyphthiodiolenone synthase] + 5 CO2 + 5 NADP(+) + 5 CoA + 2 H2O. The catalysed reaction is 19-(4-hydroxyphenyl)nonadecanoyl-[(phenol)carboxyphthiodiolenone synthase] + 2 (S)-methylmalonyl-CoA + 3 malonyl-CoA + 5 NADPH + 10 H(+) = C37-(phenol)carboxyphthiodiolenone-[(phenol)carboxyphthiodiolenone synthase] + 5 CO2 + 5 NADP(+) + 5 CoA + 2 H2O. The protein operates within lipid metabolism; fatty acid biosynthesis. Functionally, part of the PpsABCDE complex involved in the biosynthesis of the lipid core common to phthiocerols and phenolphthiocerols by successive additions of malonyl-CoA or methylmalonyl-CoA extender units. PpsA can accept as substrate the activated forms of either icosanoyl (C20), docosanoyl (C22) or lignoceroyl (C24) groups from FadD26, or a (4-hydroxyphenyl)-C17 or (4-hydroxyphenyl)-C19 fatty acyl from FadD29. PpsA initiates the biosynthesis and extends its substrate using a malonyl-CoA extender unit. The PpsB and PpsC proteins add the second and third malonyl-CoA extender units. PpsD adds an (R)-methylmalonyl unit and PpsE adds a second (R)-methylmalonyl unit. The incorporation of the methylmalonyl units results in formation of two branched methyl groups in the elongated product. This is Phenolphthiocerol/phthiocerol polyketide synthase subunit A (ppsA) from Mycobacterium bovis (strain ATCC BAA-935 / AF2122/97).